Consider the following 201-residue polypeptide: Imidazoleglycerol-phosphate dehydratase (201 aa).

Belongs to the imidazoleglycerol-phosphate dehydratase family.

It is found in the cytoplasm. The enzyme catalyses D-erythro-1-(imidazol-4-yl)glycerol 3-phosphate = 3-(imidazol-4-yl)-2-oxopropyl phosphate + H2O. The protein operates within amino-acid biosynthesis; L-histidine biosynthesis; L-histidine from 5-phospho-alpha-D-ribose 1-diphosphate: step 6/9. The sequence is that of Imidazoleglycerol-phosphate dehydratase from Prochlorococcus marinus (strain AS9601).